Here is a 227-residue protein sequence, read N- to C-terminus: Large ribosomal subunit protein uL3 (227 aa).

Gln151 is subject to N5-methylglutamine.

It belongs to the universal ribosomal protein uL3 family. Part of the 50S ribosomal subunit. Forms a cluster with proteins L14 and L19. In terms of processing, methylated by PrmB.

One of the primary rRNA binding proteins, it binds directly near the 3'-end of the 23S rRNA, where it nucleates assembly of the 50S subunit. This Gluconacetobacter diazotrophicus (strain ATCC 49037 / DSM 5601 / CCUG 37298 / CIP 103539 / LMG 7603 / PAl5) protein is Large ribosomal subunit protein uL3.